A 155-amino-acid chain; its full sequence is Interleukin-2 (155 aa).

Residues 1–20 (MYSRQLASCVALALVLLANS) form the signal peptide. O-linked (GalNAc...) threonine glycosylation occurs at threonine 23. The cysteines at positions 78 and 126 are disulfide-linked.

This sequence belongs to the IL-2 family.

The protein resides in the secreted. Cytokine produced by activated CD4-positive helper T-cells and to a lesser extend activated CD8-positive T-cells and natural killer (NK) cells that plays pivotal roles in the immune response and tolerance. Binds to a receptor complex composed of either the high-affinity trimeric IL-2R (IL2RA/CD25, IL2RB/CD122 and IL2RG/CD132) or the low-affinity dimeric IL-2R (IL2RB and IL2RG). Interaction with the receptor leads to oligomerization and conformation changes in the IL-2R subunits resulting in downstream signaling starting with phosphorylation of JAK1 and JAK3. In turn, JAK1 and JAK3 phosphorylate the receptor to form a docking site leading to the phosphorylation of several substrates including STAT5. This process leads to activation of several pathways including STAT, phosphoinositide-3-kinase/PI3K and mitogen-activated protein kinase/MAPK pathways. Functions as a T-cell growth factor and can increase NK-cell cytolytic activity as well. Promotes strong proliferation of activated B-cells and subsequently immunoglobulin production. Plays a pivotal role in regulating the adaptive immune system by controlling the survival and proliferation of regulatory T-cells, which are required for the maintenance of immune tolerance. Moreover, participates in the differentiation and homeostasis of effector T-cell subsets, including Th1, Th2, Th17 as well as memory CD8-positive T-cells. The sequence is that of Interleukin-2 (IL2) from Meriones unguiculatus (Mongolian jird).